Reading from the N-terminus, the 201-residue chain is uncharacterized protein (201 aa).

The interval 53–74 (PKKNTAHKNSTTSTVASSGNTT) is disordered. Residues 59-74 (HKNSTTSTVASSGNTT) show a composition bias toward polar residues. In terms of domain architecture, bHLH spans 88–136 (AKRLSHKEVERRRREAISEGIKELANIVPGCEKNKGSILQRTAQYIRSL).

It is found in the nucleus. This is an uncharacterized protein from Schizosaccharomyces pombe (strain 972 / ATCC 24843) (Fission yeast).